Here is a 723-residue protein sequence, read N- to C-terminus: Choline transporter-like protein 4 (723 aa).

The Cytoplasmic portion of the chain corresponds to 1–36 (MGKKKQEEEQNSSEYGAPAQYDPTFNGPIHKRSCTD). A helical membrane pass occupies residues 37–57 (IICCVLFMLVITGYMVVGILA). At 58–245 (WLYGDPRHVL…RIFEDFAKTW (188 aa)) the chain is on the extracellular side. 4 N-linked (GlcNAc...) asparagine glycosylation sites follow: Asn71, Asn202, Asn211, and Asn219. A helical membrane pass occupies residues 246-266 (QWIVAGLVIAMVVSVLFLLLL). The Cytoplasmic segment spans residues 267-269 (RFT). A helical membrane pass occupies residues 270-290 (APVLIWILIFGVLAVGAFGIW). At 291 to 325 (YCYNDYMSLASSNLTFSNVGFTTNVQVYLQVRDTW) the chain is on the extracellular side. An N-linked (GlcNAc...) asparagine glycan is attached at Asn303. Residues 326–346 (LAFLIILCIVEAVLILALIFL) form a helical membrane-spanning segment. The Cytoplasmic portion of the chain corresponds to 347–374 (RTRILIAIALIQETSKALGHMMSTLLYP). A helical membrane pass occupies residues 375 to 395 (VVTFVLLLVCVSYWGITALYL). The Extracellular segment spans residues 396 to 464 (ATSGAPIYKV…RNLFNLQIYN (69 aa)). N-linked (GlcNAc...) asparagine glycans are attached at residues Asn409, Asn421, and Asn430. A helical membrane pass occupies residues 465–485 (VVAFLWCVNFVIALGHCTLAG). The Cytoplasmic portion of the chain corresponds to 486–516 (AFASYYWAFSKPADIPTFPLTQSFMRALRYH). A helical transmembrane segment spans residues 517–537 (VGSLAFGALILTLVQIVRIIL). The Extracellular segment spans residues 538–578 (EYLDHKFKAAQNPCARFLMCCLKCCFWCLEKFIKFINRNAY). The chain crosses the membrane as a helical span at residues 579–599 (IMIAIYGKNFCVSAKNAFFLL). Residues 600–615 (MRNIVRVVVLDKVTDL) lie on the Cytoplasmic side of the membrane. The chain crosses the membrane as a helical span at residues 616–636 (LLFFGKLLVVGGIGVLAFFFF). At 637–655 (SGRIQLPGNTFQTAALNYY) the chain is on the extracellular side. The helical transmembrane segment at 656-676 (WMPIITVVFGAYLIAHGFFSV) threads the bilayer. The Cytoplasmic segment spans residues 677-723 (YNMGVDTLFLCFLEDLERNDGSAEKPYFMSKNLMKILNKKNKQPKTG).

This sequence belongs to the CTL (choline transporter-like) family.

It localises to the membrane. Its subcellular location is the apical cell membrane. It carries out the reaction choline(out) + n H(+)(in) = choline(in) + n H(+)(out). It catalyses the reaction thiamine diphosphate(out) = thiamine diphosphate(in). Its function is as follows. Choline transporter that seems to play a role in the choline-acetylcholine system and is required to the efferent innervation of hair cells in the olivocochlear bundle for the maintenance of physiological function of outer hair cells and the protection of hair cells from acoustic injury. Also described as a thiamine pyrophosphate transporter. In Danio rerio (Zebrafish), this protein is Choline transporter-like protein 4 (slc44a4).